The primary structure comprises 538 residues: SWM histone demethylase complex subunit phf2 (538 aa).

Disordered stretches follow at residues 28–47, 98–150, and 198–222; these read RFPNDLHPTMFEGEESNQNG, EIES…SSPL, and TKSGRKVHRPNHFDPLVKLPTRRRG. Residues 98 to 111 show a composition bias toward basic and acidic residues; that stretch reads EIESSKNQETDAKS. Residues 232-288 form a PHD-type zinc finger; that stretch reads AMKCSVCQRLQSPPKNRIVFCDGCNTPFHQLCHEPYISDELLDSPNGEWFCDDCIRR. The segment covering 367–392 has biased composition (polar residues); it reads GDQYLSLNNGTESQSKTTKHSTSLPS. Positions 367–396 are disordered; sequence GDQYLSLNNGTESQSKTTKHSTSLPSTEPV.

In terms of assembly, component of the SWM histone demethylase complex composed of at least lsd1, lsd2, phf1 and phf2.

It localises to the nucleus. Component of the SWM histone demethylase complex that specifically demethylates H3K9me2, a specific tag for epigenetic transcriptional activation, thereby acting as a corepressor. Has a role in regulating heterochromatin propagation and euchromatic transcription. In Schizosaccharomyces pombe (strain 972 / ATCC 24843) (Fission yeast), this protein is SWM histone demethylase complex subunit phf2 (phf2).